We begin with the raw amino-acid sequence, 179 residues long: ATP-dependent protease subunit HslV (179 aa).

Threonine 7 is a catalytic residue. 3 residues coordinate Na(+): glycine 162, cysteine 165, and threonine 168.

Belongs to the peptidase T1B family. HslV subfamily. A double ring-shaped homohexamer of HslV is capped on each side by a ring-shaped HslU homohexamer. The assembly of the HslU/HslV complex is dependent on binding of ATP.

The protein resides in the cytoplasm. The catalysed reaction is ATP-dependent cleavage of peptide bonds with broad specificity.. Its activity is regulated as follows. Allosterically activated by HslU binding. Protease subunit of a proteasome-like degradation complex believed to be a general protein degrading machinery. The sequence is that of ATP-dependent protease subunit HslV from Teredinibacter turnerae (strain ATCC 39867 / T7901).